The following is a 436-amino-acid chain: GTPase Der (436 aa).

2 consecutive EngA-type G domains span residues 4–167 (PIVA…DEET) and 176–351 (IRLS…ENHK). GTP-binding positions include 10–17 (GRPNVGKS), 57–61 (DTGGI), 119–122 (NKVD), 182–189 (GRPNVGKS), 229–233 (DTAGM), and 294–297 (NKWD). Positions 352–436 (KRVQSSTLNE…PIHIIPRRRN (85 aa)) constitute a KH-like domain.

It belongs to the TRAFAC class TrmE-Era-EngA-EngB-Septin-like GTPase superfamily. EngA (Der) GTPase family. In terms of assembly, associates with the 50S ribosomal subunit.

Its function is as follows. GTPase that plays an essential role in the late steps of ribosome biogenesis. This Staphylococcus haemolyticus (strain JCSC1435) protein is GTPase Der.